The following is a 287-amino-acid chain: ATP phosphoribosyltransferase (287 aa).

Belongs to the ATP phosphoribosyltransferase family. Long subfamily. Mg(2+) serves as cofactor.

Its subcellular location is the cytoplasm. The enzyme catalyses 1-(5-phospho-beta-D-ribosyl)-ATP + diphosphate = 5-phospho-alpha-D-ribose 1-diphosphate + ATP. Its pathway is amino-acid biosynthesis; L-histidine biosynthesis; L-histidine from 5-phospho-alpha-D-ribose 1-diphosphate: step 1/9. With respect to regulation, feedback inhibited by histidine. Its function is as follows. Catalyzes the condensation of ATP and 5-phosphoribose 1-diphosphate to form N'-(5'-phosphoribosyl)-ATP (PR-ATP). Has a crucial role in the pathway because the rate of histidine biosynthesis seems to be controlled primarily by regulation of HisG enzymatic activity. The protein is ATP phosphoribosyltransferase (hisG) of Methanothermobacter thermautotrophicus (strain ATCC 29096 / DSM 1053 / JCM 10044 / NBRC 100330 / Delta H) (Methanobacterium thermoautotrophicum).